A 588-amino-acid chain; its full sequence is Aspartate--tRNA ligase (588 aa).

Residue Glu-172 participates in L-aspartate binding. The interval 196 to 199 (QLFK) is aspartate. Arg-218 contributes to the L-aspartate binding site. ATP is bound by residues 218–220 (RDE) and Gln-227. Residue His-449 coordinates L-aspartate. Residue Glu-483 coordinates ATP. Residue Arg-490 participates in L-aspartate binding. 535 to 538 (GLDR) is a binding site for ATP.

Belongs to the class-II aminoacyl-tRNA synthetase family. Type 1 subfamily. Homodimer.

Its subcellular location is the cytoplasm. The enzyme catalyses tRNA(Asp) + L-aspartate + ATP = L-aspartyl-tRNA(Asp) + AMP + diphosphate. Catalyzes the attachment of L-aspartate to tRNA(Asp) in a two-step reaction: L-aspartate is first activated by ATP to form Asp-AMP and then transferred to the acceptor end of tRNA(Asp). In Haemophilus influenzae (strain 86-028NP), this protein is Aspartate--tRNA ligase.